Here is a 314-residue protein sequence, read N- to C-terminus: Melanoma-associated antigen 3 (314 aa).

The segment covering 1–20 (MPLEQRSQHCKPEEGLEARG) has biased composition (basic and acidic residues). Residues 1 to 99 (MPLEQRSQHC…QEEEGPSTFP (99 aa)) form a disordered region. The segment covering 21–44 (EALGLVGAQAPATEEQEAASSSST) has biased composition (low complexity). Positions 65–87 (PQGASSLPTTMNYPLWSQSYEDS) are enriched in polar residues. The 200-residue stretch at 109-308 (LSRKVAELVH…ISYPPLHEWV (200 aa)) folds into the MAGE domain.

In terms of assembly, interacts with TRIM28. In terms of processing, ubiquitinated by the DCX(DCAF12) complex specifically recognizes the diglutamate (Glu-Glu) at the C-terminus, leading to its degradation. In terms of tissue distribution, expressed in many tumors of several types, such as melanoma, head and neck squamous cell carcinoma, lung carcinoma and breast carcinoma, but not in normal tissues except for testes and placenta. Never expressed in kidney tumors, Leukemias and lymphomas.

Functionally, activator of ubiquitin ligase activity of RING-type zinc finger-containing E3 ubiquitin-protein ligases that acts as a repressor of autophagy. May enhance ubiquitin ligase activity of TRIM28 and stimulate p53/TP53 ubiquitination by TRIM28. Proposed to act through recruitment and/or stabilization of the Ubl-conjugating enzyme (E2) at the E3:substrate complex. May play a role in embryonal development and tumor transformation or aspects of tumor progression. In vitro promotes cell viability in melanoma cell lines. Antigen recognized on a melanoma by autologous cytolytic T-lymphocytes. In Homo sapiens (Human), this protein is Melanoma-associated antigen 3.